The primary structure comprises 103 residues: uncharacterized protein (103 aa).

This is an uncharacterized protein from Archaeoglobus fulgidus (strain ATCC 49558 / DSM 4304 / JCM 9628 / NBRC 100126 / VC-16).